Consider the following 350-residue polypeptide: Nicotinate-nucleotide--dimethylbenzimidazole phosphoribosyltransferase (350 aa).

Glutamate 316 (proton acceptor) is an active-site residue.

Belongs to the CobT family.

It carries out the reaction 5,6-dimethylbenzimidazole + nicotinate beta-D-ribonucleotide = alpha-ribazole 5'-phosphate + nicotinate + H(+). It functions in the pathway nucleoside biosynthesis; alpha-ribazole biosynthesis; alpha-ribazole from 5,6-dimethylbenzimidazole: step 1/2. Its function is as follows. Catalyzes the synthesis of alpha-ribazole-5'-phosphate from nicotinate mononucleotide (NAMN) and 5,6-dimethylbenzimidazole (DMB). This is Nicotinate-nucleotide--dimethylbenzimidazole phosphoribosyltransferase from Pseudomonas savastanoi pv. phaseolicola (strain 1448A / Race 6) (Pseudomonas syringae pv. phaseolicola (strain 1448A / Race 6)).